A 124-amino-acid chain; its full sequence is Small ribosomal subunit protein bS6 (124 aa).

The segment at 101–124 is disordered; that stretch reads IMMKEVQREEARKSAQSDAPAVAA. Positions 105–115 are enriched in basic and acidic residues; sequence EVQREEARKSA.

This sequence belongs to the bacterial ribosomal protein bS6 family.

Its function is as follows. Binds together with bS18 to 16S ribosomal RNA. This chain is Small ribosomal subunit protein bS6, found in Polynucleobacter asymbioticus (strain DSM 18221 / CIP 109841 / QLW-P1DMWA-1) (Polynucleobacter necessarius subsp. asymbioticus).